We begin with the raw amino-acid sequence, 523 residues long: Translation initiation factor eIF2B subunit delta (523 aa).

The segment at 1–147 (MAAVAVAVRE…PSGVKRLPEY (147 aa)) is disordered. Ala-2 carries the post-translational modification N-acetylalanine. Ser-12 is subject to Phosphoserine. The segment covering 30–40 (EMTKEEKLQLR) has biased composition (basic and acidic residues). Basic residues predominate over residues 41–51 (KEKKQQKKKRK). Residue Thr-86 is modified to Phosphothreonine. Residues 87–121 (PREKVPAGRSKAELRAERRAKQEAERALKQARKGE) are compositionally biased toward basic and acidic residues. A Phosphoserine modification is found at Ser-130. Positions 170–179 (RKDYGSKVSL) are may bind the chemical integrated stress response (ISR) inhibitor ISRIB.

This sequence belongs to the eIF-2B alpha/beta/delta subunits family. As to quaternary structure, component of the translation initiation factor 2B (eIF2B) complex which is a heterodecamer of two sets of five different subunits: alpha, beta, gamma, delta and epsilon. Subunits alpha, beta and delta comprise a regulatory subcomplex and subunits epsilon and gamma comprise a catalytic subcomplex. Within the complex, the hexameric regulatory complex resides at the center, with the two heterodimeric catalytic subcomplexes bound on opposite sides.

It is found in the cytoplasm. Its subcellular location is the cytosol. Its activity is regulated as follows. Activated by the chemical integrated stress response (ISR) inhibitor ISRIB which stimulates guanine nucleotide exchange factor activity for both phosphorylated and unphosphorylated eIF2. Acts as a component of the translation initiation factor 2B (eIF2B) complex, which catalyzes the exchange of GDP for GTP on eukaryotic initiation factor 2 (eIF2) gamma subunit. Its guanine nucleotide exchange factor activity is repressed when bound to eIF2 complex phosphorylated on the alpha subunit, thereby limiting the amount of methionyl-initiator methionine tRNA available to the ribosome and consequently global translation is repressed. This chain is Translation initiation factor eIF2B subunit delta (EIF2B4), found in Homo sapiens (Human).